We begin with the raw amino-acid sequence, 774 residues long: Two pore channel protein 2 (774 aa).

Over 1–92 (MEEEPLLAGS…GSLRLYRWYY (92 aa)) the chain is Cytoplasmic. The helical transmembrane segment at 93-113 (SNLCQWGLGLTIAVVLALAFI) threads the bilayer. Residues 114–140 (ERPSSLTYTSDIRVKPKPWEPPCGMTE) lie on the Extracellular side of the membrane. The helical transmembrane segment at 141 to 161 (GIEIVCLCIFILDVTAKGYLI) threads the bilayer. Residues 162–170 (GWEEFRMNK) are Cytoplasmic-facing. Residues 171-191 (WLLAYLIVITASVIDWMLSIS) form a helical membrane-spanning segment. Residues 192–197 (MLCDEN) lie on the Extracellular side of the membrane. A helical transmembrane segment spans residues 198–218 (LRVRRLIRPFFLLQNSSLMKK). The segment at 217-221 (KKTLK) is interaction with phosphatidylinositol 3,5-bisphosphate. At 219-232 (TLKCIKRTLPEIAS) the chain is on the cytoplasmic side. Residues 233–253 (VILLLALHICLFTMIGMLIFA) form a helical membrane-spanning segment. At 254 to 267 (KSDDPKQNGEWQTY) the chain is on the extracellular side. The helical; Pore-forming intramembrane region spans 268–292 (FRNLPKALSSLLVLLTTANNPDVMI). At 293–302 (PAYSLNRGYS) the chain is on the extracellular side. A helical membrane pass occupies residues 303-323 (IFFILFSVFGTYLLMNLMTAI). The Cytoplasmic segment spans residues 324-452 (IYNQFRGYLL…YVYSHYYISV (129 aa)). A helical transmembrane segment spans residues 453-475 (LGNAVALANVICICTVLVLNAEK). Residues 476–486 (SASEKNYFYME) are Extracellular-facing. A helical membrane pass occupies residues 487–507 (IINCIFILYYLIEMLLKIVAF). Residues 508–518 (GWKGYLSYRNN) lie on the Cytoplasmic side of the membrane. A helical membrane pass occupies residues 519–539 (IFDGFLTVLLLAIQIVIFITF). Residues 540-564 (KIPYVDVDPVPRHVMALWEMIRLVN) are Extracellular-facing. The chain crosses the membrane as a helical span at residues 565 to 585 (MLIVFRFLRIIPEIKLMAVVA). Topologically, residues 586-596 (STIVDLVKNLR) are cytoplasmic. The chain crosses the membrane as a helical span at residues 597–617 (AFAGILLVVYYMFAVLGIWLF). Residues 618 to 658 (QGAISPPSNMSLVSNSSLENITGPYSMECGTFEQLEYWPNN) lie on the Extracellular side of the membrane. N-linked (GlcNAc...) asparagine glycosylation is found at N626, N632, and N637. The helical; Pore-forming intramembrane region spans 659-681 (FDDFASSLILLYNIMVVNNWHVF). Topologically, residues 682-696 (TDAYARYTTDWSLVY) are extracellular. Residues 697 to 717 (FVVWWLTSSVMWVNLFVALIL) form a helical membrane-spanning segment. Over 718–774 (ENFTYKWDRSNGLSVEDVERIAYQSTVQLMFKEHVKEPTEEELLAQLHQHPHLHLSW) the chain is Cytoplasmic.

It belongs to the calcium channel alpha-1 subunit (TC 1.A.1.11) family. Two pore calcium channel subfamily. In terms of assembly, homodimer. N-glycosylated.

The protein resides in the late endosome membrane. It is found in the lysosome membrane. The enzyme catalyses Na(+)(in) = Na(+)(out). It catalyses the reaction Ca(2+)(in) = Ca(2+)(out). Functionally, intracellular channel initially characterized as a non-selective Ca(2+)-permeable channel activated by NAADP (nicotinic acid adenine dinucleotide phosphate), it is also a highly-selective Na(+) channel activated directly by PI(3,5)P2 (phosphatidylinositol 3,5-bisphosphate). Localizes to the lysosomal and late endosome membranes where it regulates organellar membrane excitability, membrane trafficking, and pH homeostasis. This chain is Two pore channel protein 2 (tpcn2), found in Danio rerio (Zebrafish).